The following is a 351-amino-acid chain: Protein-glutamate methylesterase/protein-glutamine glutaminase 2 (351 aa).

Residues 4–121 (KVLVVDDSAL…PQDFNEYQDL (118 aa)) enclose the Response regulatory domain. Position 55 is a 4-aspartylphosphate (Asp-55). The CheB-type methylesterase domain maps to 156 to 348 (RVINTQLVAI…DKMLNYLASL (193 aa)). Active-site residues include Ser-168, His-194, and Asp-290.

Belongs to the CheB family. In terms of processing, phosphorylated by CheA. Phosphorylation of the N-terminal regulatory domain activates the methylesterase activity.

The protein resides in the cytoplasm. The enzyme catalyses [protein]-L-glutamate 5-O-methyl ester + H2O = L-glutamyl-[protein] + methanol + H(+). It carries out the reaction L-glutaminyl-[protein] + H2O = L-glutamyl-[protein] + NH4(+). In terms of biological role, involved in chemotaxis. Part of a chemotaxis signal transduction system that modulates chemotaxis in response to various stimuli. Catalyzes the demethylation of specific methylglutamate residues introduced into the chemoreceptors (methyl-accepting chemotaxis proteins or MCP) by CheR. Also mediates the irreversible deamidation of specific glutamine residues to glutamic acid. This Shewanella sp. (strain MR-7) protein is Protein-glutamate methylesterase/protein-glutamine glutaminase 2.